The following is a 550-amino-acid chain: Chaperonin GroEL 2 (550 aa).

ATP-binding positions include 30-33, Lys51, 87-91, Gly415, 480-482, and Asp496; these read TLGP, DGTTT, and NAA.

Belongs to the chaperonin (HSP60) family. In terms of assembly, forms a cylinder of 14 subunits composed of two heptameric rings stacked back-to-back. Interacts with the co-chaperonin GroES.

The protein resides in the cytoplasm. It catalyses the reaction ATP + H2O + a folded polypeptide = ADP + phosphate + an unfolded polypeptide.. Its function is as follows. Together with its co-chaperonin GroES, plays an essential role in assisting protein folding. The GroEL-GroES system forms a nano-cage that allows encapsulation of the non-native substrate proteins and provides a physical environment optimized to promote and accelerate protein folding. This chain is Chaperonin GroEL 2, found in Erythrobacter litoralis (strain HTCC2594).